A 393-amino-acid polypeptide reads, in one-letter code: Small ribosomal subunit protein bS1 (393 aa).

S1 motif domains are found at residues 16 to 90 (GDKV…LSKR), 108 to 173 (NQTI…LSRK), 194 to 262 (GDVI…LSIK), and 279 to 348 (GDVI…LSIK). The span at 356–369 (VIESDSETTQSYLD) shows a compositional bias: polar residues. A disordered region spans residues 356-381 (VIESDSETTQSYLDNGSDDEDNPTLG).

It belongs to the bacterial ribosomal protein bS1 family.

In terms of biological role, binds mRNA; thus facilitating recognition of the initiation point. It is needed to translate mRNA with a short Shine-Dalgarno (SD) purine-rich sequence. The sequence is that of Small ribosomal subunit protein bS1 (rpsA) from Staphylococcus saprophyticus subsp. saprophyticus (strain ATCC 15305 / DSM 20229 / NCIMB 8711 / NCTC 7292 / S-41).